We begin with the raw amino-acid sequence, 623 residues long: Prothrombin (623 aa).

The signal sequence occupies residues 1–24 (MAHVRGLQLPGCLALAALCTLVHS). Positions 25-43 (QHVFLAPQQALSLLQRVRR) are excised as a propeptide. Residues 44 to 90 (ANSVFLEEVRKGNLERECVEETCSYEEAFEALESSTATDVFWAKYTA) form the Gla domain. 4-carboxyglutamate is present on residues Glu-50, Glu-51, Glu-58, Glu-60, Glu-63, Glu-64, Glu-69, Glu-70, Glu-73, and Glu-76. Residues Cys-61 and Cys-66 are joined by a disulfide bond. 11 disulfide bridges follow: Cys-91/Cys-104, Cys-109/Cys-187, Cys-130/Cys-170, Cys-158/Cys-182, Cys-214/Cys-292, Cys-235/Cys-275, Cys-263/Cys-287, Cys-337/Cys-483, Cys-392/Cys-408, Cys-537/Cys-551, and Cys-565/Cys-595. 2 consecutive Kringle domains span residues 108-187 (NCAE…IPVC) and 213-292 (QCVP…LNYC). Asn-122 and Asn-144 each carry an N-linked (GlcNAc...) asparagine glycan. In terms of domain architecture, Peptidase S1 spans 365–619 (IVEGSDAEIG…LKKWIQKVID (255 aa)). His-407 (charge relay system) is an active-site residue. A glycan (N-linked (GlcNAc...) asparagine) is linked at Asn-417. The Charge relay system role is filled by Asp-463. The interval 552 to 574 (AGYKPDEGKRGDACEGDSGGPFV) is high affinity receptor-binding region which also known as the TP508 peptide. The active-site Charge relay system is Ser-569.

It belongs to the peptidase S1 family. In terms of assembly, heterodimer (named alpha-thrombin) of a light and a heavy chain; disulfide-linked. Forms a heterodimer with SERPINA5. In plasma, interacts (via N-terminus) with alpha-1-microglobulin; this interaction does not prevent the activation of prothrombin to thrombin. The gamma-carboxyglutamyl residues, which bind calcium ions, result from the carboxylation of glutamyl residues by a microsomal enzyme, the vitamin K-dependent carboxylase. The modified residues are necessary for the calcium-dependent interaction with a negatively charged phospholipid surface, which is essential for the conversion of prothrombin to thrombin. In terms of processing, in the penultimate step of the coagulation cascade, prothrombin is converted to thrombin by the prothrombinase complex composed of factor Xa (F10), cofactor Va (F5), and phospholipids. This activation requires factor Xa-catalyzed sequential cleavage at 2 sites, Arg-315 and Arg-364, along 2 possible pathways. In the first pathway, the first cleavage occurs at Arg-315, leading to the formation of the inactive intermediate prethrombin-2. This pathway preferentially occurs on platelets and in the absence of cofactor Va. In the second pathway, the first cleavage occurs at Arg-364, which separates protease domain into 2 chains that remain connected through a disulfide bond and generates the active intermediate meizothrombin. The presence of cofactor Va directs activation along the meizothrombin pathway and greatly accelerates the rate of cleavage at Arg-364, but has a smaller effect on the cleavage of meizothrombin at Arg-315. Meizothrombin accumulates as an intermediate when prothrombinase is assembled on the membrane of red blood cells.

It catalyses the reaction Selective cleavage of Arg-|-Gly bonds in fibrinogen to form fibrin and release fibrinopeptides A and B.. With respect to regulation, activity is promoted in the presence of negatively charged surfaces, such as polyphosphate and dextran sulfate. Inhibited by SERPINA5. In terms of biological role, thrombin, which cleaves bonds after Arg and Lys, converts fibrinogen to fibrin and activates factors V, VII, VIII, XIII, and, in complex with thrombomodulin, protein C. Functions in blood homeostasis, inflammation and wound healing. Activates coagulation factor XI (F11); activation is promoted by the contact with negatively charged surfaces. Triggers the production of pro-inflammatory cytokines, such as MCP-1/CCL2 and IL8/CXCL8, in endothelial cells. The polypeptide is Prothrombin (F2) (Pongo abelii (Sumatran orangutan)).